Consider the following 715-residue polypeptide: Fatty acid oxidation complex subunit alpha (715 aa).

The tract at residues 8–197 (NSQPSAFSLT…NLGLVEEAVP (190 aa)) is enoyl-CoA hydratase. The 3-hydroxyacyl-CoA dehydrogenase stretch occupies residues 313 to 715 (ATIKKVGVLG…MANEEQSFYS (403 aa)).

It in the N-terminal section; belongs to the enoyl-CoA hydratase/isomerase family. In the central section; belongs to the 3-hydroxyacyl-CoA dehydrogenase family. Heterotetramer of two alpha chains (FadJ) and two beta chains (FadI).

The protein resides in the cytoplasm. It catalyses the reaction a (3S)-3-hydroxyacyl-CoA = a (2E)-enoyl-CoA + H2O. The enzyme catalyses a 4-saturated-(3S)-3-hydroxyacyl-CoA = a (3E)-enoyl-CoA + H2O. It carries out the reaction a (3S)-3-hydroxyacyl-CoA + NAD(+) = a 3-oxoacyl-CoA + NADH + H(+). The catalysed reaction is (3S)-3-hydroxybutanoyl-CoA = (3R)-3-hydroxybutanoyl-CoA. Its pathway is lipid metabolism; fatty acid beta-oxidation. Its function is as follows. Catalyzes the formation of a hydroxyacyl-CoA by addition of water on enoyl-CoA. Also exhibits 3-hydroxyacyl-CoA epimerase and 3-hydroxyacyl-CoA dehydrogenase activities. In Photobacterium profundum (strain SS9), this protein is Fatty acid oxidation complex subunit alpha.